The sequence spans 996 residues: Alanine--tRNA ligase, chloroplastic/mitochondrial (996 aa).

Zn(2+) is bound by residues His677, His681, Cys779, and His783.

Belongs to the class-II aminoacyl-tRNA synthetase family. In terms of assembly, monomer. Requires Zn(2+) as cofactor.

The protein localises to the plastid. It localises to the chloroplast. Its subcellular location is the mitochondrion. The enzyme catalyses tRNA(Ala) + L-alanine + ATP = L-alanyl-tRNA(Ala) + AMP + diphosphate. Functionally, catalyzes the attachment of alanine to tRNA(Ala) in a two-step reaction: alanine is first activated by ATP to form Ala-AMP and then transferred to the acceptor end of tRNA(Ala). Also edits incorrectly charged tRNA(Ala) via its editing domain. This Oryza sativa subsp. indica (Rice) protein is Alanine--tRNA ligase, chloroplastic/mitochondrial.